The primary structure comprises 148 residues: Deoxyuridine 5'-triphosphate nucleotidohydrolase (148 aa).

Substrate is bound by residues 68 to 70, Asn-81, 85 to 87, and Lys-95; these read RSG and TID.

Belongs to the dUTPase family. Requires Mg(2+) as cofactor.

The enzyme catalyses dUTP + H2O = dUMP + diphosphate + H(+). Its pathway is pyrimidine metabolism; dUMP biosynthesis; dUMP from dCTP (dUTP route): step 2/2. Its function is as follows. This enzyme is involved in nucleotide metabolism: it produces dUMP, the immediate precursor of thymidine nucleotides and it decreases the intracellular concentration of dUTP so that uracil cannot be incorporated into DNA. The chain is Deoxyuridine 5'-triphosphate nucleotidohydrolase from Rickettsia typhi (strain ATCC VR-144 / Wilmington).